The chain runs to 199 residues: 5'-deoxynucleotidase YfbR (199 aa).

Residues 18–19 (RW) and His-33 each bind substrate. The 113-residue stretch at 30 to 142 (VSEHSLQVAM…VKQADALCAY (113 aa)) folds into the HD domain. Residues His-33, His-68, and Asp-69 each contribute to the a divalent metal cation site. Residues Asp-69, 77–80 (DLPT), and Asp-137 each bind substrate. A divalent metal cation is bound at residue Asp-137.

This sequence belongs to the 5DNU family. As to quaternary structure, homodimer. Requires a divalent metal cation as cofactor.

The protein resides in the cytoplasm. The enzyme catalyses a 2'-deoxyribonucleoside 5'-phosphate + H2O = a 2'-deoxyribonucleoside + phosphate. Its function is as follows. Catalyzes the strictly specific dephosphorylation of 2'-deoxyribonucleoside 5'-monophosphates. The polypeptide is 5'-deoxynucleotidase YfbR (Shigella boydii serotype 18 (strain CDC 3083-94 / BS512)).